Here is a 1465-residue protein sequence, read N- to C-terminus: DNA polymerase III PolC-type (1465 aa).

The 157-residue stretch at 427–583 folds into the Exonuclease domain; sequence YVVFDVETTG…YDAEATGRLL (157 aa).

This sequence belongs to the DNA polymerase type-C family. PolC subfamily.

The protein resides in the cytoplasm. It carries out the reaction DNA(n) + a 2'-deoxyribonucleoside 5'-triphosphate = DNA(n+1) + diphosphate. Required for replicative DNA synthesis. This DNA polymerase also exhibits 3' to 5' exonuclease activity. This chain is DNA polymerase III PolC-type, found in Streptococcus pyogenes serotype M4 (strain MGAS10750).